Here is a 367-residue protein sequence, read N- to C-terminus: MKVKVLSLLVPALLVAGAANAAEVYNKDGNKLDLYGKVDGLHYFSDDKSVDGDQTYMRLGFKGETQVTDQLTGYGQWEYQIQGNSAENENNSWTRVAFAGLKFQDVGSFDYGRNYGVVYDVTSWTDVLPEFGGDTYGSDNFMQQRGNGFATYRNTDFFGLVDGLNFAVQYQGKNGSVSGEGMTNNGREALRQNGDGVGGSITYDYEGFGIGAAVSSSKRTDDQNSPLYIGNGDRAETYTGGLKYDANNIYLAAQYTQTYNATRVGSLGWANKAQNFEAVAQYQFDFGLRPSLAYLQSKGKNLGVINGRNYDDEDILKYVDVGATYYFNKNMSTYVDYKINLLDDNQFTRDAGINTDNIVALGLVYQF.

The N-terminal stretch at 1–21 is a signal peptide; the sequence is MKVKVLSLLVPALLVAGAANA.

The protein belongs to the Gram-negative porin family. In terms of assembly, homotrimer.

Its subcellular location is the cell outer membrane. Its function is as follows. Forms pores that allow passive diffusion of small molecules across the outer membrane. The polypeptide is Outer membrane porin C (ompC) (Escherichia coli O157:H7).